The sequence spans 101 residues: Small ribosomal subunit protein uS14 (101 aa).

This sequence belongs to the universal ribosomal protein uS14 family. Part of the 30S ribosomal subunit. Contacts proteins S3 and S10.

Functionally, binds 16S rRNA, required for the assembly of 30S particles and may also be responsible for determining the conformation of the 16S rRNA at the A site. This is Small ribosomal subunit protein uS14 from Francisella tularensis subsp. holarctica (strain FTNF002-00 / FTA).